The chain runs to 177 residues: Large ribosomal subunit protein uL6 (177 aa).

It belongs to the universal ribosomal protein uL6 family. In terms of assembly, part of the 50S ribosomal subunit.

In terms of biological role, this protein binds to the 23S rRNA, and is important in its secondary structure. It is located near the subunit interface in the base of the L7/L12 stalk, and near the tRNA binding site of the peptidyltransferase center. In Glaesserella parasuis serovar 5 (strain SH0165) (Haemophilus parasuis), this protein is Large ribosomal subunit protein uL6.